Consider the following 294-residue polypeptide: DEP domain-containing protein 4 (294 aa).

Residues 71 to 162 enclose the DEP domain; that stretch reads LQAQVEIKRR…SNISLYRFLG (92 aa).

In Homo sapiens (Human), this protein is DEP domain-containing protein 4 (DEPDC4).